A 277-amino-acid polypeptide reads, in one-letter code: Undecaprenyl-diphosphatase (277 aa).

Helical transmembrane passes span 88 to 108 (MGWLVILGSLPIIVLGLLFQD), 117 to 137 (MWIVATMLIVFGLILAVADAV), 157 to 179 (FAQAMALIPGVSRSGGTITAGLL), 191 to 211 (SFLLAIPAVFGSGLYQLYKVV), 227 to 247 (LATVIAFVVGYVIIGWFLKFV), and 255 to 275 (FVWYRIFLGLALYLLLGFGVI).

This sequence belongs to the UppP family.

The protein resides in the cell membrane. It catalyses the reaction di-trans,octa-cis-undecaprenyl diphosphate + H2O = di-trans,octa-cis-undecaprenyl phosphate + phosphate + H(+). Catalyzes the dephosphorylation of undecaprenyl diphosphate (UPP). Confers resistance to bacitracin. The sequence is that of Undecaprenyl-diphosphatase from Pseudarthrobacter chlorophenolicus (strain ATCC 700700 / DSM 12829 / CIP 107037 / JCM 12360 / KCTC 9906 / NCIMB 13794 / A6) (Arthrobacter chlorophenolicus).